The following is a 201-amino-acid chain: Mediator of RNA polymerase II transcription subunit 22 (201 aa).

Residues 93-123 (SVNEAIDQRNQQLRALQEECDRKLIALRDEV) adopt a coiled-coil conformation. The interval 166-201 (LSAPLLASPEPSAGGPLQAAAPTHSHAGGPGPTEHA) is disordered.

Component of the Mediator complex, which is composed of MED1, MED4, MED6, MED7, MED8, MED9, MED10, MED11, MED12, MED13, MED13L, MED14, MED15, MED16, MED17, MED18, MED19, MED20, MED21, MED22, MED23, MED24, MED25, MED26, MED27, MED29, MED30, MED31, CCNC, CDK8 and CDC2L6/CDK11. The MED12, MED13, CCNC and CDK8 subunits form a distinct module termed the CDK8 module. Mediator containing the CDK8 module is less active than Mediator lacking this module in supporting transcriptional activation. Individual preparations of the Mediator complex lacking one or more distinct subunits have been variously termed ARC, CRSP, DRIP, PC2, SMCC and TRAP.

It localises to the nucleus. Component of the Mediator complex, a coactivator involved in the regulated transcription of nearly all RNA polymerase II-dependent genes. Mediator functions as a bridge to convey information from gene-specific regulatory proteins to the basal RNA polymerase II transcription machinery. Mediator is recruited to promoters by direct interactions with regulatory proteins and serves as a scaffold for the assembly of a functional preinitiation complex with RNA polymerase II and the general transcription factors. The protein is Mediator of RNA polymerase II transcription subunit 22 (MED22) of Bos taurus (Bovine).